We begin with the raw amino-acid sequence, 92 residues long: Putative septation protein SpoVG (92 aa).

This sequence belongs to the SpoVG family.

Could be involved in septation. The chain is Putative septation protein SpoVG from Thermoanaerobacter sp. (strain X514).